The following is a 518-amino-acid chain: MAIKAEEISALIKEQIENYQQQLAVEEVGTVTYVGDGIARAHGLENAMSGELVEFSNGSYGMAQNLETNDVGIIILGDFETIREGDKVQRTGKIMEVPVGEALIGRVVNPLGQPLDGLGEIKTDKTRPVEATAPGVMQRQSVAEPMQTGLKAIDALVPIGRGQRELVIGDRKTGKTSIAIDTIINQKGQDVICIYVAIGQKESTVRNQVETLRKFGALDYTIVVTAGASQPAPLLYIAPYAGTAMGEEFMYNGKHVLIIFDDLSKQAVAYRELSLLLRRPPGREAYPGDVFYLHSRLLERAAKLSDELGGGSMTALPFVETQAGDISAYIPTNVISITDGQIFLESDLFYAGTRPAVDAGLSVSRVGGSAQIKAMKKVAGTLRLDLASYRELEAFTQFGSDLDAATQAKLNRGRRTVEILKQKLHAPLPVEKQVLILYALTHGFLDSVSVDKILHFEQDLFDYFDGKHADLLETIRTTKDLPDTDALDAAITEFSEMFAAANNSGDSAKEALEKIDNA.

Residue 169–176 (GDRKTGKT) participates in ATP binding.

The protein belongs to the ATPase alpha/beta chains family. In terms of assembly, F-type ATPases have 2 components, CF(1) - the catalytic core - and CF(0) - the membrane proton channel. CF(1) has five subunits: alpha(3), beta(3), gamma(1), delta(1), epsilon(1). CF(0) has three main subunits: a(1), b(2) and c(9-12). The alpha and beta chains form an alternating ring which encloses part of the gamma chain. CF(1) is attached to CF(0) by a central stalk formed by the gamma and epsilon chains, while a peripheral stalk is formed by the delta and b chains.

It is found in the cell membrane. The catalysed reaction is ATP + H2O + 4 H(+)(in) = ADP + phosphate + 5 H(+)(out). Produces ATP from ADP in the presence of a proton gradient across the membrane. The alpha chain is a regulatory subunit. This chain is ATP synthase subunit alpha, found in Enterococcus faecalis (strain ATCC 700802 / V583).